The sequence spans 289 residues: RNA exonuclease 4 (289 aa).

The span at 1–24 shows a compositional bias: polar residues; sequence MALSSNWQALLASESNPTSNGKNK. The disordered stretch occupies residues 1 to 34; that stretch reads MALSSNWQALLASESNPTSNGKNKQSNRKIRNVK. Over residues 25-34 the composition is skewed to basic residues; sequence QSNRKIRNVK. The region spanning 121–273 is the Exonuclease domain; that stretch reads YIAMDCEFVG…EDARATMLLY (153 aa).

Belongs to the REXO4 family.

Its subcellular location is the nucleus. Exoribonuclease involved in ribosome biosynthesis. Involved in the processing of ITS1, the internal transcribed spacer localized between the 18S and 5.8S rRNAs. In Saccharomyces cerevisiae (strain ATCC 204508 / S288c) (Baker's yeast), this protein is RNA exonuclease 4 (REX4).